Consider the following 595-residue polypeptide: O-phosphoseryl-tRNA(Sec) selenium transferase (595 aa).

R75 contacts pyridoxal 5'-phosphate. The tract at residues 96–106 (GRSGDLFSEQP) is phosphate loop (P-loop). Residues R97, S98, and Q105 each contribute to the substrate site. A compositionally biased stretch (polar residues) spans 174–187 (RTVTKDSTSATSAA). Disordered stretches follow at residues 174–208 (RTVT…TSLP) and 257–278 (STNR…TPTS). A compositionally biased stretch (basic and acidic residues) spans 196–205 (EADRDRHDRT). R358 provides a ligand contact to tRNA. K371 bears the N6-(pyridoxal phosphate)lysine mark. A substrate-binding site is contributed by R400.

The protein belongs to the SepSecS family. As to quaternary structure, homotetramer composed of two homodimers. It depends on pyridoxal 5'-phosphate as a cofactor.

It is found in the cytoplasm. It carries out the reaction O-phospho-L-seryl-tRNA(Sec) + selenophosphate + H2O = L-selenocysteinyl-tRNA(Sec) + 2 phosphate. It participates in aminoacyl-tRNA biosynthesis; selenocysteinyl-tRNA(Sec) biosynthesis; selenocysteinyl-tRNA(Sec) from L-seryl-tRNA(Sec) (archaeal/eukaryal route): step 2/2. Functionally, converts O-phosphoseryl-tRNA(Sec) to selenocysteinyl-tRNA(Sec) required for selenoprotein biosynthesis. The protein is O-phosphoseryl-tRNA(Sec) selenium transferase of Leishmania donovani.